The primary structure comprises 307 residues: PCP degradation transcriptional activation protein (307 aa).

Positions 6–63 (LPLGHLMVFDALYRHGSAGKAAHALSMPQPTLSRWLAQLRTHFDDPLFVRTRSGMEPT) constitute an HTH lysR-type domain. A DNA-binding region (H-T-H motif) is located at residues 23–42 (AGKAAHALSMPQPTLSRWLA).

The protein belongs to the LysR transcriptional regulatory family.

Transcriptional activator for the pcpA, pcpB and pcpE genes for pentachlorophenol (PCP) degradation. Essential for PCP degradation. This is PCP degradation transcriptional activation protein (pcpR) from Sphingobium chlorophenolicum.